The primary structure comprises 64 residues: Large ribosomal subunit protein bL35 (64 aa).

2 stretches are compositionally biased toward basic residues: residues 1–15 (MPKA…KRFR) and 23–33 (VRQKANRRHLL). The disordered stretch occupies residues 1–47 (MPKAKTHSGASKRFRTTGSGKIVRQKANRRHLLEHKPTSRTRRLDGR). Residues 34 to 46 (EHKPTSRTRRLDG) are compositionally biased toward basic and acidic residues.

It belongs to the bacterial ribosomal protein bL35 family.

In Mycobacteroides abscessus (strain ATCC 19977 / DSM 44196 / CCUG 20993 / CIP 104536 / JCM 13569 / NCTC 13031 / TMC 1543 / L948) (Mycobacterium abscessus), this protein is Large ribosomal subunit protein bL35.